A 370-amino-acid chain; its full sequence is Histidinol-phosphate aminotransferase (370 aa).

K230 carries the N6-(pyridoxal phosphate)lysine modification.

It belongs to the class-II pyridoxal-phosphate-dependent aminotransferase family. Histidinol-phosphate aminotransferase subfamily. In terms of assembly, homodimer. Requires pyridoxal 5'-phosphate as cofactor.

It catalyses the reaction L-histidinol phosphate + 2-oxoglutarate = 3-(imidazol-4-yl)-2-oxopropyl phosphate + L-glutamate. Its pathway is amino-acid biosynthesis; L-histidine biosynthesis; L-histidine from 5-phospho-alpha-D-ribose 1-diphosphate: step 7/9. The polypeptide is Histidinol-phosphate aminotransferase (Leptospira interrogans serogroup Icterohaemorrhagiae serovar Lai (strain 56601)).